The sequence spans 510 residues: Propionyl-CoA carboxylase beta chain (510 aa).

Residues 1–257 (MKDILQELEN…SNRTPAPVRP (257 aa)) form the CoA carboxyltransferase N-terminal domain. The tract at residues 1–504 (MKDILQELEN…NKKLANPWKK (504 aa)) is carboxyltransferase. The region spanning 264 to 504 (RIEDSLDTLI…NKKLANPWKK (241 aa)) is the CoA carboxyltransferase C-terminal domain.

This sequence belongs to the AccD/PCCB family. As to quaternary structure, probably a dodecamer composed of six biotin-containing alpha subunits and six beta subunits.

It carries out the reaction propanoyl-CoA + hydrogencarbonate + ATP = (S)-methylmalonyl-CoA + ADP + phosphate + H(+). It functions in the pathway metabolic intermediate metabolism; propanoyl-CoA degradation; succinyl-CoA from propanoyl-CoA: step 1/3. This is Propionyl-CoA carboxylase beta chain from Cereibacter sphaeroides (strain ATCC 17023 / DSM 158 / JCM 6121 / CCUG 31486 / LMG 2827 / NBRC 12203 / NCIMB 8253 / ATH 2.4.1.) (Rhodobacter sphaeroides).